Here is a 274-residue protein sequence, read N- to C-terminus: Undecaprenyl-diphosphatase (274 aa).

The next 6 membrane-spanning stretches (helical) occupy residues A44–W64, L85–I105, L109–A129, A185–L205, A215–V235, and F250–V270.

Belongs to the UppP family.

The protein resides in the cell inner membrane. It carries out the reaction di-trans,octa-cis-undecaprenyl diphosphate + H2O = di-trans,octa-cis-undecaprenyl phosphate + phosphate + H(+). Its function is as follows. Catalyzes the dephosphorylation of undecaprenyl diphosphate (UPP). Confers resistance to bacitracin. This Acidovorax ebreus (strain TPSY) (Diaphorobacter sp. (strain TPSY)) protein is Undecaprenyl-diphosphatase.